We begin with the raw amino-acid sequence, 353 residues long: Feruloyl esterase B (353 aa).

A signal peptide spans Met1–Ala18. The tract at residues Ala19–Ile291 is catalytic. The Charge relay system role is filled by Ser136. Asn179 and Asn246 each carry an N-linked (GlcNAc...) asparagine glycan. A CBM1 domain is found at Cys317 to Leu353.

This sequence belongs to the carbohydrate esterase 1 (CE1) family. Feruloyl esterase type B subfamily. In terms of processing, glycosylated.

The protein localises to the secreted. It catalyses the reaction feruloyl-polysaccharide + H2O = ferulate + polysaccharide.. Inhibited by the specific serine esterase inhibitor AEBSF. Its function is as follows. Involved in degradation of plant cell walls. Hydrolyzes the feruloyl-arabinose ester bond in arabinoxylans, and the feruloyl-galactose and feruloyl-arabinose ester bonds in pectin. Binds strongly to cellulose. The polypeptide is Feruloyl esterase B (FAEB) (Talaromyces funiculosus (Fruitlet core rot fungus)).